Consider the following 692-residue polypeptide: Elongation factor G (692 aa).

Residues 8–282 form the tr-type G domain; that stretch reads EKTRNIGIMA…AIVDFLPAPT (275 aa). GTP contacts are provided by residues 17–24, 81–85, and 135–138; these read AHIDAGKT, DTPGH, and NKMD.

The protein belongs to the TRAFAC class translation factor GTPase superfamily. Classic translation factor GTPase family. EF-G/EF-2 subfamily.

The protein localises to the cytoplasm. Catalyzes the GTP-dependent ribosomal translocation step during translation elongation. During this step, the ribosome changes from the pre-translocational (PRE) to the post-translocational (POST) state as the newly formed A-site-bound peptidyl-tRNA and P-site-bound deacylated tRNA move to the P and E sites, respectively. Catalyzes the coordinated movement of the two tRNA molecules, the mRNA and conformational changes in the ribosome. This is Elongation factor G from Moorella thermoacetica (strain ATCC 39073 / JCM 9320).